Here is a 396-residue protein sequence, read N- to C-terminus: MKILVLNSGSSSIKFKFFDNKIVKASGLVEKIGEQNSKVVLKNTLNNESFERELTINNHEEGLSIVNELFKESGILADLNALDGCGHRIVHGGRNLSEHCLVDDYVLKEIDRVSIFAPLHNPAHLAGIKTMIKAAPSVANAAIFDTAFHRTMPDFAYMYALPYDFYDKHNIRRYGFHGTSHAYVSSRAAKFLQKDQNELNVISAHLGNGASVCAIEKGKSMDTSMGFTPLEGLIMGTRCGDLDPAILPFVSHLKGLTIEEIDTLMNKKSGVYGICGYNDFRDIEREIEQGNDKARLALDMFCYRLVKYIGSYFAVLPKTDAIIFTGGIGENDSLVRQKVCERLAHLGIELDFELNKQRISGERMINHANSKLKVLVIPTDEELEIARITEELIGKN.

N7 is a binding site for Mg(2+). K14 provides a ligand contact to ATP. R88 lines the substrate pocket. D145 acts as the Proton donor/acceptor in catalysis. Residues 205-209 (HLGNG), 279-281 (DFR), and 327-331 (GIGEN) contribute to the ATP site. E381 is a binding site for Mg(2+).

It belongs to the acetokinase family. In terms of assembly, homodimer. The cofactor is Mg(2+). It depends on Mn(2+) as a cofactor.

The protein localises to the cytoplasm. The enzyme catalyses acetate + ATP = acetyl phosphate + ADP. The protein operates within metabolic intermediate biosynthesis; acetyl-CoA biosynthesis; acetyl-CoA from acetate: step 1/2. Functionally, catalyzes the formation of acetyl phosphate from acetate and ATP. Can also catalyze the reverse reaction. In Campylobacter jejuni (strain RM1221), this protein is Acetate kinase.